The primary structure comprises 256 residues: tRNA-cytidine(32) 2-sulfurtransferase (256 aa).

Residues Ser-35–Ser-40 carry the PP-loop motif motif. [4Fe-4S] cluster contacts are provided by Cys-110, Cys-113, and Cys-201.

This sequence belongs to the TtcA family. In terms of assembly, homodimer. Mg(2+) is required as a cofactor. Requires [4Fe-4S] cluster as cofactor.

It is found in the cytoplasm. It carries out the reaction cytidine(32) in tRNA + S-sulfanyl-L-cysteinyl-[cysteine desulfurase] + AH2 + ATP = 2-thiocytidine(32) in tRNA + L-cysteinyl-[cysteine desulfurase] + A + AMP + diphosphate + H(+). Its pathway is tRNA modification. Functionally, catalyzes the ATP-dependent 2-thiolation of cytidine in position 32 of tRNA, to form 2-thiocytidine (s(2)C32). The sulfur atoms are provided by the cysteine/cysteine desulfurase (IscS) system. This chain is tRNA-cytidine(32) 2-sulfurtransferase, found in Coxiella burnetii (strain RSA 331 / Henzerling II).